Reading from the N-terminus, the 1088-residue chain is Restriction of telomere capping protein 1 (1088 aa).

The disordered stretch occupies residues 26-56; the sequence is NSSTPQSHEISPSSSLSSSRSKKQTSQYNTQ. Low complexity predominate over residues 27–44; the sequence is SSTPQSHEISPSSSLSSS. WD repeat units follow at residues 131-170, 176-215, 222-266, 275-314, 367-417, 432-473, and 502-546; these read APNKLINVNTIKTFADTIATGLSNGVVSIYKISPNGQSKV, DHNRTINSLDFIESENQLLSGSQDGTIKLWDLRSSSTKPV, LHSD…GGKV, LHTGPALSLHIHPEKELVVTGGRDKRISIFNYGERQSRNT, DPTI…TFSS, IEDL…TTEE, and DKPQ…SSIP. Residues 537–560 are compositionally biased toward polar residues; sequence DSATSSSSIPNMQVSSSRPKLTRN. The segment at 537–597 is disordered; it reads DSATSSSSIP…SPQYKKNNPP (61 aa). Residues 561-572 show a composition bias toward low complexity; the sequence is TSQTTQDSSSSQ. Residues 582-593 are compositionally biased toward polar residues; the sequence is ASQTYSSPQYKK. One copy of the WD 8 repeat lies at 631–671; sequence STPDGFTLVDVCLLNASVAASVGNNRTSQIWRLLAVSIQEE. The span at 709 to 732 shows a compositional bias: polar residues; it reads AETTNSNFVESFKSTSTSGSQFGK. 3 disordered regions span residues 709–751, 764–829, and 844–871; these read AETT…GNLM, SATS…FSPP, and SLASSPKSVRGPSGVKSHISRSRPSPPV. Residues 769-794 are compositionally biased toward basic and acidic residues; sequence KFKEQERKEDESQKAQSIKDENERAS. A compositionally biased stretch (polar residues) spans 796–806; the sequence is HSKSAPISISS. The segment at 1040 to 1083 adopts an RING-type; degenerate zinc-finger fold; that stretch reads CVYCNEPCKGLAVTVGLKCGHHGHFGCLKEWFIEDQNTECPGGC.

It belongs to the WD repeat RTC1 family.

The protein resides in the vacuole. Its function is as follows. May be involved in a process influencing telomere capping. The chain is Restriction of telomere capping protein 1 (RTC1) from Candida albicans (strain WO-1) (Yeast).